A 610-amino-acid polypeptide reads, in one-letter code: Butyryl-CoA dehydrogenase Swol_2052 (610 aa).

Glu451 serves as the catalytic Proton acceptor.

This sequence belongs to the acyl-CoA dehydrogenase family. The cofactor is FAD.

The protein localises to the cytoplasm. It catalyses the reaction butanoyl-CoA + oxidized [electron-transfer flavoprotein] + H(+) = (2E)-butenoyl-CoA + reduced [electron-transfer flavoprotein]. The enzyme catalyses a short-chain 2,3-saturated fatty acyl-CoA + oxidized [electron-transfer flavoprotein] + H(+) = a short-chain (2E)-enoyl-CoA + reduced [electron-transfer flavoprotein]. Its pathway is lipid metabolism; butanoate metabolism. Involved in syntrophic growth of S.wolfei with butyrate, as part of the butyrate oxidation pathway. Catalyzes the oxidation of butanoyl-CoA to crotonyl-CoA. Probably passes the electrons released by this reaction on to electron-transfer flavoproteins (EtfAB) to finally generate hydrogen and/or formate. This is Butyryl-CoA dehydrogenase Swol_2052 from Syntrophomonas wolfei subsp. wolfei (strain DSM 2245B / Goettingen).